A 211-amino-acid chain; its full sequence is Uracil phosphoribosyltransferase (211 aa).

5-phospho-alpha-D-ribose 1-diphosphate-binding positions include arginine 78, arginine 103, and 130 to 138 (DPMLATGGT). Uracil-binding positions include isoleucine 195 and 200-202 (GDA). A 5-phospho-alpha-D-ribose 1-diphosphate-binding site is contributed by aspartate 201.

The protein belongs to the UPRTase family. Requires Mg(2+) as cofactor.

The enzyme catalyses UMP + diphosphate = 5-phospho-alpha-D-ribose 1-diphosphate + uracil. It participates in pyrimidine metabolism; UMP biosynthesis via salvage pathway; UMP from uracil: step 1/1. Allosterically activated by GTP. Its function is as follows. Catalyzes the conversion of uracil and 5-phospho-alpha-D-ribose 1-diphosphate (PRPP) to UMP and diphosphate. This Streptomyces griseus subsp. griseus (strain JCM 4626 / CBS 651.72 / NBRC 13350 / KCC S-0626 / ISP 5235) protein is Uracil phosphoribosyltransferase.